The chain runs to 170 residues: Ribosome maturation factor RimP (170 aa).

The protein belongs to the RimP family.

The protein resides in the cytoplasm. Its function is as follows. Required for maturation of 30S ribosomal subunits. The polypeptide is Ribosome maturation factor RimP (Chlorobaculum parvum (strain DSM 263 / NCIMB 8327) (Chlorobium vibrioforme subsp. thiosulfatophilum)).